The following is a 209-amino-acid chain: Uracil phosphoribosyltransferase (209 aa).

Residues arginine 79, arginine 104, and 131–139 (DPMLATGGS) contribute to the 5-phospho-alpha-D-ribose 1-diphosphate site. Uracil-binding positions include isoleucine 194 and 199–201 (GDA). Residue aspartate 200 participates in 5-phospho-alpha-D-ribose 1-diphosphate binding.

The protein belongs to the UPRTase family. Mg(2+) is required as a cofactor.

The catalysed reaction is UMP + diphosphate = 5-phospho-alpha-D-ribose 1-diphosphate + uracil. Its pathway is pyrimidine metabolism; UMP biosynthesis via salvage pathway; UMP from uracil: step 1/1. With respect to regulation, allosterically activated by GTP. Catalyzes the conversion of uracil and 5-phospho-alpha-D-ribose 1-diphosphate (PRPP) to UMP and diphosphate. This is Uracil phosphoribosyltransferase from Shouchella clausii (strain KSM-K16) (Alkalihalobacillus clausii).